Here is a 215-residue protein sequence, read N- to C-terminus: 23.2 kDa heat shock protein (215 aa).

Positions 1-27 (MASMRTAAAAAMLACIAVVLASTAADG) are cleaved as a signal peptide. The 121-residue stretch at 69 to 189 (DVAMLSMARV…GPRVVGIASA (121 aa)) folds into the sHSP domain. The interval 183-215 (VVGIASAGGDDGGKKSIGGAGEGQNQQAKKVEL) is disordered. A compositionally biased stretch (polar residues) spans 205–215 (GQNQQAKKVEL).

This sequence belongs to the small heat shock protein (HSP20) family. May form oligomeric structures.

The protein resides in the endoplasmic reticulum. This is 23.2 kDa heat shock protein (HSP23.2) from Oryza sativa subsp. japonica (Rice).